The primary structure comprises 145 residues: 3-hydroxyacyl-[acyl-carrier-protein] dehydratase FabZ (145 aa).

His49 is a catalytic residue.

Belongs to the thioester dehydratase family. FabZ subfamily.

Its subcellular location is the cytoplasm. The catalysed reaction is a (3R)-hydroxyacyl-[ACP] = a (2E)-enoyl-[ACP] + H2O. Involved in unsaturated fatty acids biosynthesis. Catalyzes the dehydration of short chain beta-hydroxyacyl-ACPs and long chain saturated and unsaturated beta-hydroxyacyl-ACPs. This is 3-hydroxyacyl-[acyl-carrier-protein] dehydratase FabZ from Rickettsia akari (strain Hartford).